The following is a 510-amino-acid chain: Ectonucleoside triphosphate diphosphohydrolase 1 (510 aa).

At 1–16 (MEDRRESELKTFCSKN) the chain is on the cytoplasmic side. A helical transmembrane segment spans residues 17 to 37 (ILVILGFSSIIAVIALLALGL). Over 38–477 (TQNKPLPENV…SSTRLSHSTY (440 aa)) the chain is Extracellular. N73 carries N-linked (GlcNAc...) asparagine glycosylation. C84 and C108 are disulfide-bonded. E174 serves as the catalytic Proton acceptor. 4 N-linked (GlcNAc...) asparagine glycosylation sites follow: N245, N274, N291, and N333. 2 disulfides stabilise this stretch: C255–C300 and C281–C324. A disulfide bond links C337 and C342. Residue N370 is glycosylated (N-linked (GlcNAc...) asparagine). C390 and C413 are oxidised to a cystine. Residue N457 is glycosylated (N-linked (GlcNAc...) asparagine). A helical transmembrane segment spans residues 478–498 (VFLMVLFSLILVIVVIIGLFV). The Cytoplasmic portion of the chain corresponds to 499 to 510 (CHRPSYFWKDMV).

The protein belongs to the GDA1/CD39 NTPase family. In terms of assembly, homodimer; disulfide-linked. The cofactor is Ca(2+). Mg(2+) serves as cofactor. Post-translationally, N-glycosylated. In terms of processing, cleaved into two polypeptides that seem to stay together by non-covalent interactions. The N-terminus is blocked. Post-translationally, palmitoylated on Cys-13; which is required for caveola targeting. Highest expression found in vascular endothelium, smooth muscle, spleen and lung (at protein level). High expression also found in stomach, duodenum, kidney, lymph node and aorta (at protein level).

It is found in the membrane. Its subcellular location is the caveola. It carries out the reaction a ribonucleoside 5'-triphosphate + 2 H2O = a ribonucleoside 5'-phosphate + 2 phosphate + 2 H(+). The enzyme catalyses a ribonucleoside 5'-triphosphate + H2O = a ribonucleoside 5'-diphosphate + phosphate + H(+). It catalyses the reaction a ribonucleoside 5'-diphosphate + H2O = a ribonucleoside 5'-phosphate + phosphate + H(+). The catalysed reaction is ATP + 2 H2O = AMP + 2 phosphate + 2 H(+). It carries out the reaction ATP + H2O = ADP + phosphate + H(+). The enzyme catalyses ADP + H2O = AMP + phosphate + H(+). It catalyses the reaction CTP + 2 H2O = CMP + 2 phosphate + 2 H(+). The catalysed reaction is CTP + H2O = CDP + phosphate + H(+). It carries out the reaction CDP + H2O = CMP + phosphate + H(+). The enzyme catalyses GTP + 2 H2O = GMP + 2 phosphate + 2 H(+). It catalyses the reaction GTP + H2O = GDP + phosphate + H(+). The catalysed reaction is GDP + H2O = GMP + phosphate + H(+). It carries out the reaction ITP + 2 H2O = IMP + 2 phosphate + 2 H(+). The enzyme catalyses ITP + H2O = IDP + phosphate + H(+). It catalyses the reaction IDP + H2O = IMP + phosphate + H(+). The catalysed reaction is UTP + 2 H2O = UMP + 2 phosphate + 2 H(+). It carries out the reaction UTP + H2O = UDP + phosphate + H(+). The enzyme catalyses UDP + H2O = UMP + phosphate + H(+). The ATP diphosphohydrolase activity is decreased by half by sodium azide. In terms of biological role, catalyzes the hydrolysis of both di- and triphosphate nucleotides (NDPs and NTPs) and hydrolyze NTPs to nucleotide monophosphates (NMPs) in two distinct successive phosphate-releasing steps, with NDPs as intermediates and participates in the regulation of extracellular levels of nucleotides. By hydrolyzing proinflammatory ATP and platelet-activating ADP to AMP, it blocks platelet aggregation and supports blood flow. This chain is Ectonucleoside triphosphate diphosphohydrolase 1, found in Sus scrofa (Pig).